An 841-amino-acid chain; its full sequence is Putative helicase R592 (841 aa).

In terms of domain architecture, Helicase ATP-binding spans 72-309; the sequence is STFVIETNSA…RRYVNKIFGQ (238 aa). 85 to 92 serves as a coordination point for ATP; sequence DKVGAGKT. The span at 195–205 shows a compositional bias: basic residues; sequence KLPVKTTKKGG. Residues 195–215 are disordered; the sequence is KLPVKTTKKGGSKTQNKAQND. Residues 206-215 are compositionally biased toward polar residues; sequence SKTQNKAQND. A DEAD box motif is present at residues 266 to 269; that stretch reads DEMD. A coiled-coil region spans residues 413–450; that stretch reads QDVDAHENRKKNIMNNIARCKTKLESIKEKINSIKDEC. The RING-type; degenerate zinc-finger motif lies at 451–491; it reads CFICTDPFENPTIMNCCKSIFCLKCLLTTLKTVGSKCPYCR. Residues 531–682 enclose the Helicase C-terminal domain; the sequence is VLEQVLSYIS…WMITNPTDLN (152 aa). The interval 678-841 is disordered; sequence PTDLNEEPDE…KAPVRKLIKV (164 aa). A compositionally biased stretch (acidic residues) spans 681-697; that stretch reads LNEEPDEESDEGSDEDV. The span at 698–725 shows a compositional bias: basic and acidic residues; sequence EKSKDKKSSDKKSSDKKKSEKKSSDKKS. The segment covering 726–749 has biased composition (basic residues); that stretch reads SNKKNSKKKTYVKPKSSKKTSQKV. Acidic residues-rich tracts occupy residues 765–774 and 782–804; these read DSDDLDDSDD and SDSD…ESEI. Composition is skewed to basic residues over residues 809–821 and 828–841; these read KSKK…KKNK and TLKK…LIKV.

This is Putative helicase R592 from Acanthamoeba polyphaga mimivirus (APMV).